A 547-amino-acid chain; its full sequence is Isoflavonoid 7-O-beta-apiosyl-glucoside beta-glycosidase (547 aa).

A signal peptide spans 1–31; it reads MHAMTFKAILLLGLLALVSTSASIAFAKEVR. Gln59 is an a beta-D-glucoside binding site. 2 N-linked (GlcNAc...) asparagine glycosylation sites follow: Asn72 and Asn132. His159 lines the a beta-D-glucoside pocket. Asn175 is a glycosylation site (N-linked (GlcNAc...) asparagine). 204–205 lines the a beta-D-glucoside pocket; it reads NE. Glu205 serves as the catalytic Proton donor. A disulfide bridge connects residues Cys224 and Cys232. A glycan (N-linked (GlcNAc...) asparagine) is linked at Asn285. Residues Tyr348, Glu419, Trp468, 475 to 476, and Phe484 each bind a beta-D-glucoside; that span reads EW. The active-site Nucleophile is the Glu419. Residue Asn490 is glycosylated (N-linked (GlcNAc...) asparagine).

The protein belongs to the glycosyl hydrolase 1 family. In terms of assembly, homotetramer.

It carries out the reaction 7-[beta-D-apiofuranosyl-(1-&gt;6)-beta-D-glucopyranosyloxy]isoflavonoid + H2O = a 7-hydroxyisoflavonoid + beta-D-apiofuranosyl-(1-&gt;6)-D-glucose.. Its activity is regulated as follows. Not inhibited by iron, calcium, mercury, manganese, zinc or EDTA. Hydrolyzes dalpatein 7-O-beta-D-apiofuranosyl-(1-&gt;6)-beta-D-glucopyranoside and dalnigrein 7-O-beta-D-apiofuranosyl-(1-&gt;6)-beta-D-glucopyranoside. Also has activity towards pNP-beta-D-fucoside and pNP-beta-D-glucoside, but not pNP-beta-cellobioside. This is Isoflavonoid 7-O-beta-apiosyl-glucoside beta-glycosidase from Dalbergia nigrescens (Thai blackwood).